A 160-amino-acid polypeptide reads, in one-letter code: Cyclic pyranopterin monophosphate synthase (160 aa).

Substrate contacts are provided by residues methionine 76 to histidine 78 and methionine 113 to glutamate 114. Aspartate 128 is a catalytic residue.

The protein belongs to the MoaC family. In terms of assembly, homohexamer; trimer of dimers.

It carries out the reaction (8S)-3',8-cyclo-7,8-dihydroguanosine 5'-triphosphate = cyclic pyranopterin phosphate + diphosphate. It functions in the pathway cofactor biosynthesis; molybdopterin biosynthesis. Its function is as follows. Catalyzes the conversion of (8S)-3',8-cyclo-7,8-dihydroguanosine 5'-triphosphate to cyclic pyranopterin monophosphate (cPMP). The chain is Cyclic pyranopterin monophosphate synthase from Brevibacillus brevis (strain 47 / JCM 6285 / NBRC 100599).